Reading from the N-terminus, the 260-residue chain is Putative enoyl-CoA hydratase/isomerase YngF (260 aa).

The protein belongs to the enoyl-CoA hydratase/isomerase family.

In Bacillus subtilis (strain 168), this protein is Putative enoyl-CoA hydratase/isomerase YngF (yngF).